The chain runs to 420 residues: Exodeoxyribonuclease 7 large subunit (420 aa).

Belongs to the XseA family. In terms of assembly, heterooligomer composed of large and small subunits.

The protein localises to the cytoplasm. It carries out the reaction Exonucleolytic cleavage in either 5'- to 3'- or 3'- to 5'-direction to yield nucleoside 5'-phosphates.. Its function is as follows. Bidirectionally degrades single-stranded DNA into large acid-insoluble oligonucleotides, which are then degraded further into small acid-soluble oligonucleotides. The sequence is that of Exodeoxyribonuclease 7 large subunit from Helicobacter pylori (strain ATCC 700392 / 26695) (Campylobacter pylori).